The primary structure comprises 237 residues: MAEKACIKRLQKEYRALCKEPVSHVVARPSPNDILEWHYVLEGSEGTPFAGGFYYGKIKFPPEYPYKPPGITMTTPNGRFMTQKKICLSMSDFHPESWNPMWSVSSILTGLLSFMMDTSPTTGSVNTTVIEKQRLAKSSLAFNCKTPAFRKLFPEYVEKYNQQQLAEQATTQLTTPESPQKSDTKVESEKTIDPTKGDSEGGLKERKKNNKQGLPAWIILLLVSVFGVVMALPLLQL.

The UBC core domain maps to 5 to 162 (ACIKRLQKEY…FPEYVEKYNQ (158 aa)). Cysteine 87 acts as the Glycyl thioester intermediate in catalysis. A disordered region spans residues 168–207 (QATTQLTTPESPQKSDTKVESEKTIDPTKGDSEGGLKERK). Residues 180 to 204 (QKSDTKVESEKTIDPTKGDSEGGLK) are compositionally biased toward basic and acidic residues. The helical transmembrane segment at 214–234 (LPAWIILLLVSVFGVVMALPL) threads the bilayer.

It belongs to the ubiquitin-conjugating enzyme family.

The protein resides in the membrane. It catalyses the reaction S-ubiquitinyl-[E1 ubiquitin-activating enzyme]-L-cysteine + [E2 ubiquitin-conjugating enzyme]-L-cysteine = [E1 ubiquitin-activating enzyme]-L-cysteine + S-ubiquitinyl-[E2 ubiquitin-conjugating enzyme]-L-cysteine.. It participates in protein modification; protein ubiquitination. In terms of biological role, accepts the ubiquitin from the E1 complex and catalyzes its covalent attachment to other proteins. The protein is Ubiquitin-conjugating enzyme E2 34 (UBC34) of Arabidopsis thaliana (Mouse-ear cress).